We begin with the raw amino-acid sequence, 503 residues long: tRNA-guanine(15) transglycosylase (503 aa).

Asp86 functions as the Nucleophile in the catalytic mechanism. Residue Asp121 coordinates substrate. Zn(2+) is bound by residues Cys278, Cys280, and Cys283.

It belongs to the archaeosine tRNA-ribosyltransferase family. Requires Zn(2+) as cofactor.

The enzyme catalyses guanosine(15) in tRNA + 7-cyano-7-deazaguanine = 7-cyano-7-carbaguanosine(15) in tRNA + guanine. It participates in tRNA modification; archaeosine-tRNA biosynthesis. In terms of biological role, exchanges the guanine residue with 7-cyano-7-deazaguanine (preQ0) at position 15 in the dihydrouridine loop (D-loop) of archaeal tRNAs. In Saccharolobus solfataricus (strain ATCC 35092 / DSM 1617 / JCM 11322 / P2) (Sulfolobus solfataricus), this protein is tRNA-guanine(15) transglycosylase.